The chain runs to 110 residues: uncharacterized protein (110 aa).

This is an uncharacterized protein from Homo sapiens (Human).